Reading from the N-terminus, the 5596-residue chain is Midasin (5596 aa).

Position 1 is an N-acetylmethionine (Met1). AAA-ATPase protomer stretches follow at residues 307–591 (SVCK…TSKL), 659–978 (LIEQ…ASNP), 1048–1316 (KEPT…QEEI), and 1362–1616 (HIVW…NKMG). 329 to 336 (GPIGCGKT) is an ATP binding site. The segment at 517 to 537 (SSVGCEQAPEEVSEARRENKR) is disordered. ATP is bound by residues 677-684 (GETGTGKT) and 1084-1091 (GETSVGKT). Thr1177 carries the post-translational modification Phosphothreonine. 1390 to 1397 (GDTGCGKT) contributes to the ATP binding site. Lys1683 bears the N6-acetyllysine mark. AAA-ATPase protomer regions lie at residues 1738–1995 (RLLR…AVFK) and 2053–2313 (MKCV…IYIS). Residues 1753–1760 (GSPGVGKT) and 2066–2073 (GPASVGKT) each bind ATP. Ser1754 is subject to Phosphoserine. The interval 2418–4691 (SLRAHETWGD…EGEGMKDVSD (2274 aa)) is linker. The disordered stretch occupies residues 3989 to 4008 (LVESDKEEQPDFLPRPTDGA). Thr4212 carries the phosphothreonine modification. Ser4538 carries the phosphoserine modification. 2 disordered regions span residues 4669–4688 (ATEF…GMKD) and 4700–5260 (EDTF…SRES). Basic and acidic residues predominate over residues 4702–4724 (TFQKGQEKDKEDPDSKSDIKGED). A compositionally biased stretch (acidic residues) spans 4741–4757 (ELEEQEEDDEKSDSEGG). Phosphoserine is present on residues Ser4752 and Ser4754. Positions 4758 to 4780 (DLDKHMGDLNGEEADKLDERLWG) are enriched in basic and acidic residues. Acidic residues predominate over residues 4781–4794 (DDDEEEDEEEEDNK). The span at 4822-4834 (NKDKSQQDKKEEK) shows a compositional bias: basic and acidic residues. Acidic residues predominate over residues 4835–4844 (EEAEADDGGQ). The segment covering 4845–4855 (GEDKINEQIDE) has biased composition (basic and acidic residues). Residues 4877 to 4888 (EALDLPDDLNLD) show a composition bias toward acidic residues. Residue Ser4889 is modified to Phosphoserine. Residues 4896–4908 (EDTDNEEGEEENP) are compositionally biased toward acidic residues. Thr4898 bears the Phosphothreonine mark. A compositionally biased stretch (basic and acidic residues) spans 4909–4928 (LEIKEKPEEAGHEAEERGET). Ser4937 and Ser4946 each carry phosphoserine. Positions 4940 to 4966 (EPEEGPSEDDKAEGEEEMDTGADDQDG) are enriched in acidic residues. Over residues 4968–4989 (AAQHPEEHSEEQQQSVEEKDKE) the composition is skewed to basic and acidic residues. Residues 5007–5021 (QEEEEREDSDTEEQV) are compositionally biased toward acidic residues. A Phosphoserine modification is found at Ser5015. The span at 5033–5046 (CGQTGVENMQNTQA) shows a compositional bias: polar residues. The segment covering 5054–5064 (PEKEQGKEEHG) has biased composition (basic and acidic residues). Residues 5088–5101 (KHTRKNTQSFKRKP) are compositionally biased toward basic residues. A compositionally biased stretch (basic and acidic residues) spans 5105 to 5115 (DNERSMGDHNE). A compositionally biased stretch (low complexity) spans 5132–5141 (QGPAQQPQAQ). Residues 5181 to 5197 (QEEEEIEDTLMDTEEQE) show a composition bias toward acidic residues. 2 stretches are compositionally biased toward basic and acidic residues: residues 5198–5213 (EFKA…EEIK) and 5233–5260 (KTEE…SRES). A VWFA domain is found at 5384–5583 (QICLAIDDSS…ALPETLSDAL (200 aa)).

Belongs to the midasin family. As to quaternary structure, associates with pre-60S ribosomes in the nucleoplasm. Interacts (via its hexameric AAA ATPase ring) with the PELP1 complex (via PELP1); the interaction is regulated by SUMO conjugation of PELP1 and is crucial for recruitment of MDN1 to the pre-ribosomal particle. Interacts (via VWFA/MIDAS domain) with WDR12 (via UBL domain). Interacts (via VWFA/MIDAS domain) with NLE1 (via UBL domain).

It is found in the nucleus. It localises to the nucleolus. Its subcellular location is the nucleoplasm. The protein localises to the cytoplasm. In terms of biological role, nuclear chaperone required for maturation and nuclear export of pre-60S ribosome subunits. Functions at successive maturation steps to remove ribosomal factors at critical transition points, first driving the exit of early pre-60S particles from the nucleolus and then driving late pre-60S particles from the nucleus. At an early stage in 60S maturation, mediates the dissociation of the PeBoW complex (PES1-BOP1-WDR12) from early pre-60S particles, rendering them competent for export from the nucleolus to the nucleoplasm. Subsequently recruited to the nucleoplasmic particles through interaction with SUMO-conjugated PELP1 complex. This binding is only possible if the 5S RNP at the central protuberance has undergone the rotation to complete its maturation. In Homo sapiens (Human), this protein is Midasin (MDN1).